Reading from the N-terminus, the 466-residue chain is Asparagine--tRNA ligase (466 aa).

Belongs to the class-II aminoacyl-tRNA synthetase family. As to quaternary structure, homodimer.

It is found in the cytoplasm. It carries out the reaction tRNA(Asn) + L-asparagine + ATP = L-asparaginyl-tRNA(Asn) + AMP + diphosphate + H(+). The polypeptide is Asparagine--tRNA ligase (Shewanella baltica (strain OS155 / ATCC BAA-1091)).